We begin with the raw amino-acid sequence, 225 residues long: Iron-sulfur flavoprotein CD630_04720 (225 aa).

[4Fe-4S] cluster-binding residues include C49, C52, C55, and C61.

It belongs to the SsuE family. Isf subfamily. As to quaternary structure, homodimer. The cofactor is FMN. [4Fe-4S] cluster serves as cofactor.

Redox-active protein probably involved in electron transport. This Clostridioides difficile (strain 630) (Peptoclostridium difficile) protein is Iron-sulfur flavoprotein CD630_04720.